The following is a 300-amino-acid chain: Tyrosine recombinase XerC (300 aa).

Residues 2–88 enclose the Core-binding (CB) domain; sequence ENVNFTLNLF…SLRSFYKFLL (87 aa). Positions 109-294 constitute a Tyr recombinase domain; sequence KIPHFLYPDE…TKDHLRYVYL (186 aa). Active-site residues include Arg149, Lys173, His246, Arg249, and His272. The active-site O-(3'-phospho-DNA)-tyrosine intermediate is the Tyr281.

This sequence belongs to the 'phage' integrase family. XerC subfamily. As to quaternary structure, forms a cyclic heterotetrameric complex composed of two molecules of XerC and two molecules of XerD.

The protein resides in the cytoplasm. Site-specific tyrosine recombinase, which acts by catalyzing the cutting and rejoining of the recombining DNA molecules. The XerC-XerD complex is essential to convert dimers of the bacterial chromosome into monomers to permit their segregation at cell division. It also contributes to the segregational stability of plasmids. In Anoxybacillus flavithermus (strain DSM 21510 / WK1), this protein is Tyrosine recombinase XerC.